Reading from the N-terminus, the 234-residue chain is uncharacterized protein (234 aa).

3 consecutive transmembrane segments (helical) span residues 32-52, 62-82, and 106-126; these read GLRT…VSVL, IPAQ…LKEG, and QGLF…NIAL.

Belongs to the MgtC/SapB family.

The protein localises to the cell membrane. This is an uncharacterized protein from Synechocystis sp. (strain ATCC 27184 / PCC 6803 / Kazusa).